A 51-amino-acid polypeptide reads, in one-letter code: Otoconin-90 (51 aa).

The protein belongs to the phospholipase A2 family. Interacts with OTOL1.

The protein localises to the secreted. Its function is as follows. Major protein of the otoconia, a calcium carbonate structure in the saccule and utricle of the ear. Together with OTOL1, acts as a scaffold for otoconia biomineralization: sequesters calcium and forms interconnecting fibrils between otoconia that are incorporated into the calcium crystal structure. Together with OTOL1, modulates calcite crystal morphology and growth kinetics. It is unlikely that this protein has phospholipase A2 activity. In Cavia porcellus (Guinea pig), this protein is Otoconin-90 (OC90).